The primary structure comprises 282 residues: Large ribosomal subunit protein uL2 (282 aa).

Residues Thr-223–Lys-282 are disordered.

Belongs to the universal ribosomal protein uL2 family. Part of the 50S ribosomal subunit. Forms a bridge to the 30S subunit in the 70S ribosome.

One of the primary rRNA binding proteins. Required for association of the 30S and 50S subunits to form the 70S ribosome, for tRNA binding and peptide bond formation. It has been suggested to have peptidyltransferase activity; this is somewhat controversial. Makes several contacts with the 16S rRNA in the 70S ribosome. This is Large ribosomal subunit protein uL2 from Mycoplasma mycoides subsp. mycoides SC (strain CCUG 32753 / NCTC 10114 / PG1).